A 267-amino-acid polypeptide reads, in one-letter code: Phosphate import ATP-binding protein PstB (267 aa).

Residues V21–I262 enclose the ABC transporter domain. G53–S60 contacts ATP.

This sequence belongs to the ABC transporter superfamily. Phosphate importer (TC 3.A.1.7) family. As to quaternary structure, the complex is composed of two ATP-binding proteins (PstB), two transmembrane proteins (PstC and PstA) and a solute-binding protein (PstS).

The protein localises to the cell inner membrane. It carries out the reaction phosphate(out) + ATP + H2O = ADP + 2 phosphate(in) + H(+). Functionally, part of the ABC transporter complex PstSACB involved in phosphate import. Responsible for energy coupling to the transport system. This chain is Phosphate import ATP-binding protein PstB, found in Xanthomonas euvesicatoria pv. vesicatoria (strain 85-10) (Xanthomonas campestris pv. vesicatoria).